A 654-amino-acid chain; its full sequence is DNA ligase (654 aa).

Residues 34 to 38, 83 to 84, and Glu114 each bind NAD(+); these read DLEYD and SL. Residue Lys116 is the N6-AMP-lysine intermediate of the active site. The NAD(+) site is built by Arg137, Glu171, Lys280, and Lys304. 4 residues coordinate Zn(2+): Cys396, Cys399, Cys414, and Cys419. One can recognise a BRCT domain in the interval 577–654; the sequence is VISTILSGYT…EEQFYDLIKQ (78 aa).

The protein belongs to the NAD-dependent DNA ligase family. LigA subfamily. It depends on Mg(2+) as a cofactor. Mn(2+) is required as a cofactor.

The enzyme catalyses NAD(+) + (deoxyribonucleotide)n-3'-hydroxyl + 5'-phospho-(deoxyribonucleotide)m = (deoxyribonucleotide)n+m + AMP + beta-nicotinamide D-nucleotide.. Functionally, DNA ligase that catalyzes the formation of phosphodiester linkages between 5'-phosphoryl and 3'-hydroxyl groups in double-stranded DNA using NAD as a coenzyme and as the energy source for the reaction. It is essential for DNA replication and repair of damaged DNA. The protein is DNA ligase of Mycoplasmopsis agalactiae (strain NCTC 10123 / CIP 59.7 / PG2) (Mycoplasma agalactiae).